The sequence spans 1642 residues: Cortactin-binding protein 2 (1642 aa).

5 disordered regions span residues 1-27, 203-222, 366-433, 446-471, and 491-611; these read MATD…AEAA, KKKT…RSTE, IGAS…HPGL, GSNA…SPTS, and RFTS…PSID. A coiled-coil region spans residues 119–276; the sequence is RKMQERMSTQ…EQLKRGTDSK (158 aa). Polar residues predominate over residues 385-394; that stretch reads GPSTGSTADL. Residues 395 to 407 show a composition bias toward low complexity; sequence TSSPTPVPSTVSP. Arginine 491 is subject to Asymmetric dimethylarginine. Pro residues predominate over residues 497-506; sequence AGAPPRPGAP. Residues 576–586 show a composition bias toward polar residues; the sequence is TVASPPSTLPQ. 6 ANK repeats span residues 702-732, 736-765, 769-798, 802-831, 835-864, and 904-934; these read GRPT…DINY, DGHS…QVNA, NGFT…NINH, GGQT…DRSV, DGWT…PAHG, and EGWT…EPER. A disordered region spans residues 1441 to 1469; the sequence is SGAWRKVSTSPRKKSGRFSSPTWNKPDLS. Serine 1513 is modified (phosphoserine). Residues 1545–1642 are disordered; the sequence is LRRFDSSGNN…NSRDLEPTQK (98 aa). Composition is skewed to polar residues over residues 1552-1563 and 1571-1588; these read GNNPVFSATVNN and KEVS…SNSK. The segment covering 1613–1627 has biased composition (low complexity); it reads SQNTKRSSSSSNTRQ.

In terms of assembly, interacts with CTTN/cortactin SH3 domain. Interacts with STRN, STRN4/zinedin and MOB4/phocein; this interactions mediate the association with the STRIPAK core complex and may regulate dendritic spine distribution of the STRIPAK complex in hippocampal neurons. Activation of glutamate receptors weakens the interaction with STRN and STRN4.

It is found in the cytoplasm. The protein resides in the cell cortex. It localises to the cell projection. The protein localises to the dendritic spine. In terms of biological role, regulates the dendritic spine distribution of CTTN/cortactin in hippocampal neurons, and thus controls dendritic spinogenesis and dendritic spine maintenance. Associates with the striatin-interacting phosphatase and kinase (STRIPAK) core complex to regulate dendritic spine distribution of the STRIPAK complex in hippocampal neurons. The protein is Cortactin-binding protein 2 (CTTNBP2) of Muntiacus muntjak (Barking deer).